A 115-amino-acid chain; its full sequence is U3-lycotoxin-Ls1a (115 aa).

The N-terminal stretch at 1-20 is a signal peptide; it reads MKFVLLFGVFLVTLFSYSSA. Positions 21-44 are excised as a propeptide; sequence EMLDDFDQADEDELLSLIEKEEAR. Disulfide bonds link Cys-48/Cys-63, Cys-55/Cys-72, Cys-62/Cys-87, and Cys-74/Cys-85.

This sequence belongs to the neurotoxin 19 (CSTX) family. 01 subfamily. In terms of tissue distribution, expressed by the venom gland.

It is found in the secreted. This Lycosa singoriensis (Wolf spider) protein is U3-lycotoxin-Ls1a.